The following is an 85-amino-acid chain: MSLNVISDDRTPHQHGTWNVAGALAPKVETSNSAHHDADSHSVVYDARYAKRPENHLAAIVNLVATNLNGAISKEHRKFESGRRS.

This is an uncharacterized protein from Sinorhizobium fredii (strain NBRC 101917 / NGR234).